Reading from the N-terminus, the 569-residue chain is 2-succinyl-5-enolpyruvyl-6-hydroxy-3-cyclohexene-1-carboxylate synthase (569 aa).

The protein belongs to the TPP enzyme family. MenD subfamily. As to quaternary structure, homodimer. It depends on Mg(2+) as a cofactor. The cofactor is Mn(2+). Requires thiamine diphosphate as cofactor.

It catalyses the reaction isochorismate + 2-oxoglutarate + H(+) = 5-enolpyruvoyl-6-hydroxy-2-succinyl-cyclohex-3-ene-1-carboxylate + CO2. It functions in the pathway quinol/quinone metabolism; 1,4-dihydroxy-2-naphthoate biosynthesis; 1,4-dihydroxy-2-naphthoate from chorismate: step 2/7. It participates in quinol/quinone metabolism; menaquinone biosynthesis. Catalyzes the thiamine diphosphate-dependent decarboxylation of 2-oxoglutarate and the subsequent addition of the resulting succinic semialdehyde-thiamine pyrophosphate anion to isochorismate to yield 2-succinyl-5-enolpyruvyl-6-hydroxy-3-cyclohexene-1-carboxylate (SEPHCHC). In Shewanella halifaxensis (strain HAW-EB4), this protein is 2-succinyl-5-enolpyruvyl-6-hydroxy-3-cyclohexene-1-carboxylate synthase.